The chain runs to 101 residues: MVSPVIDVWREGDVLVLRLYIQPRASRDHIAGAHGDEIKVAITAPPVDGQANSHLIRFLAKEFGVAKSRVILEKGELGRHKQLRIDQPRQLPEVIARLLDV.

Belongs to the UPF0235 family.

The chain is UPF0235 protein SG2030 from Sodalis glossinidius (strain morsitans).